The chain runs to 944 residues: Isoleucine--tRNA ligase (944 aa).

The short motif at 58 to 68 (PYANGSIHIGH) is the 'HIGH' region element. Glu-563 lines the L-isoleucyl-5'-AMP pocket. Residues 604 to 608 (KMSKS) carry the 'KMSKS' region motif. Lys-607 provides a ligand contact to ATP. The Zn(2+) site is built by Cys-907, Cys-910, Cys-927, and Cys-930.

The protein belongs to the class-I aminoacyl-tRNA synthetase family. IleS type 1 subfamily. In terms of assembly, monomer. Zn(2+) serves as cofactor.

Its subcellular location is the cytoplasm. It carries out the reaction tRNA(Ile) + L-isoleucine + ATP = L-isoleucyl-tRNA(Ile) + AMP + diphosphate. Functionally, catalyzes the attachment of isoleucine to tRNA(Ile). As IleRS can inadvertently accommodate and process structurally similar amino acids such as valine, to avoid such errors it has two additional distinct tRNA(Ile)-dependent editing activities. One activity is designated as 'pretransfer' editing and involves the hydrolysis of activated Val-AMP. The other activity is designated 'posttransfer' editing and involves deacylation of mischarged Val-tRNA(Ile). In Salmonella typhi, this protein is Isoleucine--tRNA ligase.